The sequence spans 254 residues: Undecaprenyl-diphosphatase (254 aa).

8 helical membrane-spanning segments follow: residues 1–21, 41–61, 75–95, 96–116, 130–150, 174–194, 210–230, and 234–254; these read MGII…FLPV, AHKA…VFLY, LIIA…IIKG, LFSP…FIAV, ILKI…IAMI, AEFS…YDIM, TGFV…IGFV, and NFVP…LFVL.

This sequence belongs to the UppP family.

It localises to the cell inner membrane. It carries out the reaction di-trans,octa-cis-undecaprenyl diphosphate + H2O = di-trans,octa-cis-undecaprenyl phosphate + phosphate + H(+). In terms of biological role, catalyzes the dephosphorylation of undecaprenyl diphosphate (UPP). Confers resistance to bacitracin. The sequence is that of Undecaprenyl-diphosphatase from Persephonella marina (strain DSM 14350 / EX-H1).